The chain runs to 61 residues: Small ribosomal subunit protein uS14 (61 aa).

Residues cysteine 24, cysteine 27, cysteine 40, and cysteine 43 each coordinate Zn(2+).

It belongs to the universal ribosomal protein uS14 family. Zinc-binding uS14 subfamily. Part of the 30S ribosomal subunit. Contacts proteins S3 and S10. Requires Zn(2+) as cofactor.

Binds 16S rRNA, required for the assembly of 30S particles and may also be responsible for determining the conformation of the 16S rRNA at the A site. The sequence is that of Small ribosomal subunit protein uS14 from Mycoplasma pneumoniae (strain ATCC 29342 / M129 / Subtype 1) (Mycoplasmoides pneumoniae).